A 139-amino-acid chain; its full sequence is MKPAARRRARECAVQALYSWQLSHNDIADIEVQFLAEQDTSDVDVAYFRDLYAGAATNAQELDKLMAPYLSRQLEELGHVERAVLRIALFELSKRQDVPYKVAINEAIELAKTFGAEESHKFINGVLDKVAPQIRPNRK.

The protein belongs to the NusB family.

Involved in transcription antitermination. Required for transcription of ribosomal RNA (rRNA) genes. Binds specifically to the boxA antiterminator sequence of the ribosomal RNA (rrn) operons. The chain is Transcription antitermination protein NusB from Sodalis glossinidius (strain morsitans).